The sequence spans 290 residues: uncharacterized protein (290 aa).

2 disordered regions span residues 1 to 98 (MLGQ…SRRV) and 209 to 236 (LSGQ…AATT). Positions 63-76 (KPDRVRPGQRDRIG) are enriched in basic and acidic residues. Low complexity predominate over residues 87–97 (AGQARAASSRR). A helical membrane pass occupies residues 261 to 281 (CILTALLAVSFHSIGVVIMTS).

It is found in the membrane. This is an uncharacterized protein from Homo sapiens (Human).